We begin with the raw amino-acid sequence, 245 residues long: tRNA pseudouridine synthase A (245 aa).

The active-site Nucleophile is aspartate 52. Tyrosine 111 is a binding site for substrate.

It belongs to the tRNA pseudouridine synthase TruA family. As to quaternary structure, homodimer.

It carries out the reaction uridine(38/39/40) in tRNA = pseudouridine(38/39/40) in tRNA. Functionally, formation of pseudouridine at positions 38, 39 and 40 in the anticodon stem and loop of transfer RNAs. This Rickettsia rickettsii (strain Iowa) protein is tRNA pseudouridine synthase A.